An 886-amino-acid chain; its full sequence is Alanine--tRNA ligase (886 aa).

Zn(2+)-binding residues include H568, H572, C670, and H674.

The protein belongs to the class-II aminoacyl-tRNA synthetase family. It depends on Zn(2+) as a cofactor.

It is found in the cytoplasm. It carries out the reaction tRNA(Ala) + L-alanine + ATP = L-alanyl-tRNA(Ala) + AMP + diphosphate. Catalyzes the attachment of alanine to tRNA(Ala) in a two-step reaction: alanine is first activated by ATP to form Ala-AMP and then transferred to the acceptor end of tRNA(Ala). Also edits incorrectly charged Ser-tRNA(Ala) and Gly-tRNA(Ala) via its editing domain. The sequence is that of Alanine--tRNA ligase from Prochlorococcus marinus (strain NATL2A).